The sequence spans 149 residues: D-aminoacyl-tRNA deacylase (149 aa).

The Gly-cisPro motif, important for rejection of L-amino acids signature appears at 137–138 (GP).

Belongs to the DTD family. Homodimer.

It localises to the cytoplasm. The catalysed reaction is glycyl-tRNA(Ala) + H2O = tRNA(Ala) + glycine + H(+). It catalyses the reaction a D-aminoacyl-tRNA + H2O = a tRNA + a D-alpha-amino acid + H(+). Its function is as follows. An aminoacyl-tRNA editing enzyme that deacylates mischarged D-aminoacyl-tRNAs. Also deacylates mischarged glycyl-tRNA(Ala), protecting cells against glycine mischarging by AlaRS. Acts via tRNA-based rather than protein-based catalysis; rejects L-amino acids rather than detecting D-amino acids in the active site. By recycling D-aminoacyl-tRNA to D-amino acids and free tRNA molecules, this enzyme counteracts the toxicity associated with the formation of D-aminoacyl-tRNA entities in vivo and helps enforce protein L-homochirality. This is D-aminoacyl-tRNA deacylase from Thermosipho africanus (strain TCF52B).